The following is a 262-amino-acid chain: Spindlin-Z (262 aa).

Residues 1 to 50 form a disordered region; that stretch reads MKTPFGKSPGQRSRADAGHAGVSASMMKKRTSHKKHRNNVGPSKPISQPR. A compositionally biased stretch (basic residues) spans 27–38; that stretch reads MKKRTSHKKHRN.

It belongs to the SPIN/STSY family. In terms of tissue distribution, expressed in several tissues including testis.

It is found in the nucleus. Its function is as follows. May play a role in mitosis. This chain is Spindlin-Z (SPINZ), found in Gallus gallus (Chicken).